Consider the following 185-residue polypeptide: Ribosome-recycling factor (185 aa).

This sequence belongs to the RRF family.

The protein localises to the cytoplasm. Responsible for the release of ribosomes from messenger RNA at the termination of protein biosynthesis. May increase the efficiency of translation by recycling ribosomes from one round of translation to another. The sequence is that of Ribosome-recycling factor from Corynebacterium urealyticum (strain ATCC 43042 / DSM 7109).